The primary structure comprises 211 residues: Small ribosomal subunit protein uS3 (211 aa).

Residues 38–106 enclose the KH type-2 domain; it reads LRNFLKKRLY…EIYLNIQEVR (69 aa).

It belongs to the universal ribosomal protein uS3 family. In terms of assembly, part of the 30S ribosomal subunit. Forms a tight complex with proteins S10 and S14.

Functionally, binds the lower part of the 30S subunit head. Binds mRNA in the 70S ribosome, positioning it for translation. This chain is Small ribosomal subunit protein uS3, found in Geobacter sulfurreducens (strain ATCC 51573 / DSM 12127 / PCA).